The sequence spans 361 residues: G-protein coupled receptor 52 (361 aa).

The Extracellular segment spans residues 1-44; sequence MNDSRWTEWRILNTSSGILNVSERHSCPLGFGHYSAVDVCIFET. N2, N13, and N20 each carry an N-linked (GlcNAc...) asparagine glycan. A helical membrane pass occupies residues 45–65; the sequence is IVIVLLTFLIIAGNLTVIFVF. Residues 66-87 are Cytoplasmic-facing; it reads HCAPLLHHYTTSYFIQTMAYAD. Residues 88–108 traverse the membrane as a helical segment; that stretch reads LFVGVSCLVPTLSLLHYSTGI. Residues 109–115 lie on the Extracellular side of the membrane; sequence HESLTCQ. Cysteines 114 and 193 form a disulfide. A helical transmembrane segment spans residues 116-136; that stretch reads VFGYIISVLKSVSMACLACIS. Over 137–159 the chain is Cytoplasmic; that stretch reads VDRYLAITKPLSYNQLVTPCRLR. The chain crosses the membrane as a helical span at residues 160–180; it reads ICIILIWIYSCLIFLPSFFGW. The Extracellular segment spans residues 181-200; it reads GKPGYHGDIFEWCATSWLTS. The helical transmembrane segment at 201 to 221 threads the bilayer; that stretch reads AYFTGFIVCLLYAPAALVVCF. Topologically, residues 222–265 are cytoplasmic; that stretch reads TYFHIFKICRQHTKEINDRRARFPSHEAAASRDAGHSPDRRYAM. The helical transmembrane segment at 266-286 threads the bilayer; the sequence is VLFRITSVFYMLWLPYIIYFL. The Extracellular portion of the chain corresponds to 287–296; sequence LESSRVLDNP. Residues 297-317 form a helical membrane-spanning segment; it reads TLSFLTTWLAISNSFCNCVIY. Residues 318–361 lie on the Cytoplasmic side of the membrane; sequence SLSNSVFRLGLRRLSETMCTSCMCVKDKEARDPKPRKRANSCSI.

The protein belongs to the G-protein coupled receptor 1 family.

Its subcellular location is the cell membrane. G- protein coupled receptor activated by antipsychotics reserpine leading to an increase in intracellular cAMP and its internalization. May play a role in locomotor activity through modulation of dopamine, NMDA and ADORA2A-induced locomotor activity. These behavioral changes are accompanied by modulation of the dopamine receptor signaling pathway in striatum. Modulates HTT level via cAMP-dependent but PKA independent mechanisms throught activation of RAB39B that translocates HTT to the endoplasmic reticulum, thus avoiding proteasome degradation. The chain is G-protein coupled receptor 52 from Bos taurus (Bovine).